Consider the following 118-residue polypeptide: uncharacterized protein (118 aa).

The signal sequence occupies residues 1-22 (MKMSYLRSGIVGFLAGASLSYA). The stretch at 41 to 71 (TATEALETDKQLYKKIEKKIEELESSCVKKS) forms a coiled coil.

This is an uncharacterized protein from Schizosaccharomyces pombe (strain 972 / ATCC 24843) (Fission yeast).